The sequence spans 246 residues: 5'-nucleotidase SurE (246 aa).

A divalent metal cation is bound by residues Asp8, Asp9, Ser39, and Asn91.

Belongs to the SurE nucleotidase family. It depends on a divalent metal cation as a cofactor.

It localises to the cytoplasm. It catalyses the reaction a ribonucleoside 5'-phosphate + H2O = a ribonucleoside + phosphate. Its function is as follows. Nucleotidase that shows phosphatase activity on nucleoside 5'-monophosphates. In Actinobacillus succinogenes (strain ATCC 55618 / DSM 22257 / CCUG 43843 / 130Z), this protein is 5'-nucleotidase SurE.